A 741-amino-acid chain; its full sequence is Polycomb protein Suz12 (741 aa).

The interval 1-21 (MAPQKHGGGGGGGSGPSAGSG) is disordered. Serine 20 is subject to Phosphoserine. Glycyl lysine isopeptide (Lys-Gly) (interchain with G-Cter in SUMO) cross-links involve residues lysine 74 and lysine 75. A Glycyl lysine isopeptide (Lys-Gly) (interchain with G-Cter in SUMO); alternate cross-link involves residue lysine 77. Lysine 77 participates in a covalent cross-link: Glycyl lysine isopeptide (Lys-Gly) (interchain with G-Cter in SUMO2); alternate. The segment at 81-108 (VQADHELFLQAFEKPTQIYRFLRTRNLI) is interaction with JARID2 and EPOP. Residues 148 to 365 (GEQESHSLSA…TLQFTLRWTG (218 aa)) form an interaction with AEBP2 and PHF19 region. Residues lysine 225 and lysine 392 each participate in a glycyl lysine isopeptide (Lys-Gly) (interchain with G-Cter in SUMO2) cross-link. The C2H2-type zinc finger occupies 450–473 (LHCPWCTLNCRKLYSLLKHLKLCH). Phosphoserine is present on residues serine 543, serine 548, and serine 585. The VEFS-box stretch occupies residues 565–641 (RLYFHSDTCL…NQMNHACMLF (77 aa)). A disordered region spans residues 689-741 (KLEKGESATPSNEEIAEEQNGTANGFSETNSKEKALETDGVSGVPKQSKKQKL). Positions 707–717 (QNGTANGFSET) are enriched in polar residues.

It belongs to the VEFS (VRN2-EMF2-FIS2-SU(Z)12) family. In terms of assembly, component of the PRC2 complex, which consists of the core subunits EED, EZH1 or EZH2, SUZ12, and RBBP4, and various combinations of accessory subunits including AEBP2, JARID2, PHF19, MTF2 and EPOP. Within the complex, interacts (via C2H2 zinc finger domain) with JARID2 and EPOP; JARID2 and EPOP compete for SUZ12 binding. Also interacts with AEBP2 and PHF19. Forms a monomeric PRC2.2 (class 2) complex consisting of at least SUZ12, RBBP4, AEBP2 and JARID2. Forms a dimeric PRC2.1 (class 1, PRC-PCL) complex consisting of at least SUZ12, RBBP4, and PHF19 or MTF2; PHF19 and MTF2 stabilize the dimeric structure which enhances PRC2 interaction with chromatin. The minimum components required for methyltransferase activity of the PRC2/EZH2 complex are EED, EZH2 and SUZ12. The PRC2 complex may also interact with DNMT1, DNMT3A, DNMT3B and PHF1 via the EZH2 subunit and with SIRT1 via the SUZ12 subunit. Interacts with WDR77. Interacts with histone H1. Interacts with CDYL. Interacts with BMAL1. Interacts with EZHIP (via C-terminal region). Interacts with ARMC12. Interacts with DDX18; this interaction inhibits the PRC2 complex. Post-translationally, sumoylated, probably by PIAS2. In terms of tissue distribution, expressed in embryonic stem cells.

The protein localises to the nucleus. Its subcellular location is the chromosome. Polycomb group (PcG) protein. Component of the PRC2/EED-EZH2 complex, which methylates 'Lys-9' (H3K9me) and 'Lys-27' (H3K27me) of histone H3, leading to transcriptional repression of the affected target gene. The PRC2/EED-EZH2 complex may also serve as a recruiting platform for DNA methyltransferases, thereby linking two epigenetic repression systems. Genes repressed by the PRC2/EED-EZH2 complex include HOXA7, HOXB6 and HOXC8. The protein is Polycomb protein Suz12 (Suz12) of Mus musculus (Mouse).